We begin with the raw amino-acid sequence, 96 residues long: Co-chaperonin GroES (96 aa).

Belongs to the GroES chaperonin family. In terms of assembly, heptamer of 7 subunits arranged in a ring. Interacts with the chaperonin GroEL.

Its subcellular location is the cytoplasm. Its function is as follows. Together with the chaperonin GroEL, plays an essential role in assisting protein folding. The GroEL-GroES system forms a nano-cage that allows encapsulation of the non-native substrate proteins and provides a physical environment optimized to promote and accelerate protein folding. GroES binds to the apical surface of the GroEL ring, thereby capping the opening of the GroEL channel. The chain is Co-chaperonin GroES from Shewanella oneidensis (strain ATCC 700550 / JCM 31522 / CIP 106686 / LMG 19005 / NCIMB 14063 / MR-1).